The primary structure comprises 168 residues: Ribosome maturation factor RimP (168 aa).

Belongs to the RimP family.

It localises to the cytoplasm. Functionally, required for maturation of 30S ribosomal subunits. The chain is Ribosome maturation factor RimP from Rickettsia bellii (strain OSU 85-389).